We begin with the raw amino-acid sequence, 189 residues long: Apolipoprotein D (189 aa).

The signal sequence occupies residues 1–20 (MATMLLLLATLAGLFTTTEG). Gln-21 is modified (pyrrolidone carboxylic acid). 2 disulfide bridges follow: Cys-28–Cys-134 and Cys-61–Cys-185. Asn-65 and Asn-98 each carry an N-linked (GlcNAc...) asparagine glycan.

It belongs to the calycin superfamily. Lipocalin family. Homodimer. As to expression, expressed in liver, kidney, bladder, adrenal, cerebrum, duodenum, testis, lung, spleen, pancreas, heart and skin.

The protein resides in the secreted. In terms of biological role, APOD occurs in the macromolecular complex with lecithin-transport and binding of bilin. Appears to be able to transport a variety of ligands in a number of different contexts. This Rattus norvegicus (Rat) protein is Apolipoprotein D (Apod).